A 978-amino-acid chain; its full sequence is MNFSRVNLFDFPLRPILLSHPSSIFVSTRFVTRTSAGVSPSILLPRSTQSPQIIAKSSSVSVQPVSEDAKEDYQSKDVSGDSIRRRFLEFFASRGHKVLPSSSLVPEDPTVLLTIAGMLQFKPIFLGKVPREVPCATTAQRCIRTNDLENVGKTARHHTFFEMLGNFSFGDYFKKEAIKWAWELSTIEFGLPANRVWVSIYEDDDEAFEIWKNEVGVSVERIKRMGEADNFWTSGPTGPCGPCSELYYDFYPERGYDEDVDLGDDTRFIEFYNLVFMQYNKTEDGLLEPLKQKNIDTGLGLERIAQILQKVPNNYETDLIYPIIAKISELANISYDSANDKAKTSLKVIADHMRAVVYLISDGVSPSNIGRGYVVRRLIRRAVRKGKSLGINGDMNGNLKGAFLPAVAEKVIELSTYIDSDVKLKASRIIEEIRQEELHFKKTLERGEKLLDQKLNDALSIADKTKDTPYLDGKDAFLLYDTFGFPVEITAEVAEERGVSIDMNGFEVEMENQRRQSQAAHNVVKLTVEDDADMTKNIADTEFLGYDSLSARAVVKSLLVNGKPVIRVSEGSEVEVLLDRTPFYAESGGQIADHGFLYVSSDGNQEKAVVEVSDVQKSLKIFVHKGTVKSGALEVGKEVEAAVDADLRQRAKVHHTATHLLQSALKKVVGQETSQAGSLVAFDRLRFDFNFNRSLHDNELEEIECLINRWIGDATRLETKVLPLADAKRAGAIAMFGEKYDENEVRVVEVPGVSMELCGGTHVGNTAEIRAFKIISEQGIASGIRRIEAVAGEAFIEYINSRDSQMTRLCSTLKVKAEDVTNRVENLLEELRAARKEASDLRSKAAVYKASVISNKAFTVGTSQTIRVLVESMDDTDADSLKSAAEHLISTLEDPVAVVLGSSPEKDKVSLVAAFSPGVVSLGVQAGKFIGPIAKLCGGGGGGKPNFAQAGGRKPENLPSALEKAREDLVATLSEKLG.

Positions 655, 659, 758, and 762 each coordinate Zn(2+). Residue lysine 773 forms a Glycyl lysine isopeptide (Lys-Gly) (interchain with G-Cter in ubiquitin) linkage.

This sequence belongs to the class-II aminoacyl-tRNA synthetase family. In terms of assembly, monomer. The cofactor is Zn(2+).

It is found in the plastid. Its subcellular location is the chloroplast. The protein resides in the mitochondrion. The catalysed reaction is tRNA(Ala) + L-alanine + ATP = L-alanyl-tRNA(Ala) + AMP + diphosphate. In terms of biological role, catalyzes the attachment of alanine to tRNA(Ala) in a two-step reaction: alanine is first activated by ATP to form Ala-AMP and then transferred to the acceptor end of tRNA(Ala). Also edits incorrectly charged tRNA(Ala) via its editing domain. The protein is Alanine--tRNA ligase, chloroplastic/mitochondrial (EMB86) of Arabidopsis thaliana (Mouse-ear cress).